The chain runs to 419 residues: NF-kappa-B essential modulator (419 aa).

Residues 1-46 form a disordered region; sequence MSRTPWKSQPCEMVQPSGGPAGDQDVLGEESSLGKPTMLHLPSEQG. Residues 1–197 form a required for interaction with and ubiquitination by MARCHF2 region; that stretch reads MSRTPWKSQP…REALQQQHSV (197 aa). Ser-31, Ser-43, Ser-68, and Ser-85 each carry phosphoserine. The interval 44–111 is interaction with CHUK/IKBKB; it reads EQGAPETFQR…RLVERLSLEK (68 aa). A coiled-coil region spans residues 100-353; the sequence is ARRLVERLSL…KTSCQESARI (254 aa). Residues Lys-111, Lys-139, Lys-143, Lys-226, Lys-246, and Lys-264 each participate in a glycyl lysine isopeptide (Lys-Gly) (interchain with G-Cter in ubiquitin) cross-link. The segment at 150 to 257 is interaction with TANK; it reads LGELQESQSR…SVVSSERNRG (108 aa). The interval 242 to 350 is ubiquitin-binding (UBAN); the sequence is DNHIKSSVVS…SRLKTSCQES (109 aa). The self-association stretch occupies residues 246–365; it reads KSSVVSSERN…MRKRHVEVSQ (120 aa). Positions 251–419 are required for interaction with TNFAIP3; the sequence is SSERNRGLQL…LQIHVMECIE (169 aa). Residue Lys-277 forms a Glycyl lysine isopeptide (Lys-Gly) (interchain with G-Cter in SUMO); alternate linkage. Residue Lys-277 forms a Glycyl lysine isopeptide (Lys-Gly) (interchain with G-Cter in ubiquitin); alternate linkage. Glycyl lysine isopeptide (Lys-Gly) (interchain with G-Cter in ubiquitin) cross-links involve residues Lys-283, Lys-285, Lys-292, and Lys-302. Lys-309 participates in a covalent cross-link: Glycyl lysine isopeptide (Lys-Gly) (interchain with G-Cter in SUMO); alternate. Lys-309 is covalently cross-linked (Glycyl lysine isopeptide (Lys-Gly) (interchain with G-Cter in ubiquitin); alternate). Residues 322–343 form a leucine-zipper region; sequence LAERKELLQEQLEQLQREYSRL. A Glycyl lysine isopeptide (Lys-Gly) (interchain with G-Cter in ubiquitin) cross-link involves residue Lys-326. Residues 363–394 form a disordered region; that stretch reads VSQPTLPPAPAHHSFHPALPSQRRSPPEEPPN. A phosphoserine mark is found at Ser-376 and Ser-387. The tract at residues 382–419 is interaction with CYLD; that stretch reads PSQRRSPPEEPPNFCCPKCQYQAPDMDTLQIHVMECIE. Residues 389–419 form a CCHC NOA-type zinc finger; sequence PEEPPNFCCPKCQYQAPDMDTLQIHVMECIE. Cys-397 is a Zn(2+) binding site. Residue Lys-399 forms a Glycyl lysine isopeptide (Lys-Gly) (interchain with G-Cter in ubiquitin) linkage. 3 residues coordinate Zn(2+): Cys-400, His-413, and Cys-417.

Homodimer; disulfide-linked. Component of the I-kappa-B-kinase (IKK) core complex consisting of CHUK, IKBKB and IKBKG; probably four alpha/CHUK-beta/IKBKB dimers are associated with four gamma/IKBKG subunits. The IKK core complex seems to associate with regulatory or adapter proteins to form a IKK-signalosome holo-complex. The IKK complex associates with TERF2IP/RAP1, leading to promote IKK-mediated phosphorylation of RELA/p65. Part of a complex composed of NCOA2, NCOA3, CHUK/IKKA, IKBKB, IKBKG and CREBBP. Interacts with COPS3, CYLD, NALP2, TRPC4AP and PIDD1. Interacts with ATM; the complex is exported from the nucleus. Interacts with TRAF6. Interacts with IKBKE. Interacts with TANK; the interaction is enhanced by IKBKE and TBK1. Part of a ternary complex consisting of TANK, IKBKB and IKBKG. Interacts with ZFAND5. Interacts with RIPK2. Interacts with TNIP1 and TNFAIP3; TNIP1 facilitates the TNFAIP3-mediated de-ubiquitination of IKBKG. Interacts with TNFAIP3; the interaction is induced by TNF stimulation and by polyubiquitin. Binds (via UBAN region) polyubiquitin; binds both 'Lys-63'-linked and linear polyubiquitin, with higher affinity for linear ubiquitin. Interacts with NLRP10. Interacts with TANK; this interaction increases in response to DNA damage. Interacts with USP10; this interaction increases in response to DNA damage. Interacts with ZC3H12A; this interaction increases in response to DNA damage. Interacts with IFIT5; the interaction synergizes the recruitment of IKK to MAP3K7 and enhances IKK phosphorylation. Interacts with TRIM29; this interaction induces IKBKG/NEMO ubiquitination and proteolytic degradation. Interacts with TRIM13; this interaction leads to IKBKG/NEMO ubiquitination. Interacts with ARFIP2. Interacts with RIPK1. Interacts with (ubiquitinated) BCL10; interaction with polyubiquitinated BCL10 via both 'Lys-63'-linked and linear ubiquitin is required for TCR-induced NF-kappa-B activation. Interacts with MARCHF2; during the late stages of macrophage viral and bacterial infection; the interaction leads to ubiquitination and degradation of IKBKG/NEMO. Phosphorylation at Ser-68 attenuates aminoterminal homodimerization. Post-translationally, polyubiquitinated on Lys-285 via 'Lys-63'-linked ubiquitin; the ubiquitination is mediated downstream of NOD2 and RIPK2 and probably plays a role in signaling by facilitating interactions with ubiquitin domain-containing proteins and activates the NF-kappa-B pathway. Polyubiquitinated on Lys-285 and Lys-399 through 'Lys-63'-linked ubiquitin; the ubiquitination is mediated by BCL10, MALT1 and TRAF6 and probably plays a role in signaling by facilitating interactions with ubiquitin domain-containing proteins and activates the NF-kappa-B pathway. Monoubiquitinated on Lys-277 and Lys-309; promotes nuclear export. Polyubiquitinated through 'Lys-27' by TRIM23; involved in antiviral innate and inflammatory responses. Linear polyubiquitinated on Lys-111, Lys-143, Lys-226, Lys-246, Lys-264, Lys-277, Lys-285, Lys-292, Lys-302, Lys-309 and Lys-326; the head-to-tail polyubiquitination is mediated by the LUBAC complex and plays a key role in NF-kappa-B activation. Deubiquitinated by USP10 in a TANK-dependent and -independent manner, leading to the negative regulation of NF-kappa-B signaling upon DNA damage. Ubiquitinated at Lys-326 by MARCHF2 following bacterial and viral infection which leads to its degradation. In terms of processing, sumoylated on Lys-277 and Lys-309 with SUMO1; the modification results in phosphorylation of Ser-85 by ATM leading to a replacement of the sumoylation by mono-ubiquitination on these residues. Neddylated by TRIM40, resulting in stabilization of NFKBIA and down-regulation of NF-kappa-B activity. Post-translationally, (Microbial infection) Cleaved by porcine reproductive and respiratory syndrome virus serine protease nsp4 after Glu-349. The cleavage inhibits NEMO proper function.

The protein resides in the cytoplasm. The protein localises to the nucleus. Functionally, regulatory subunit of the IKK core complex which phosphorylates inhibitors of NF-kappa-B thus leading to the dissociation of the inhibitor/NF-kappa-B complex and ultimately the degradation of the inhibitor. Its binding to scaffolding polyubiquitin plays a key role in IKK activation by multiple signaling receptor pathways. Can recognize and bind both 'Lys-63'-linked and linear polyubiquitin upon cell stimulation, with a much highr affinity for linear polyubiquitin. Could be implicated in NF-kappa-B-mediated protection from cytokine toxicity. Essential for viral activation of IRF3. Involved in TLR3- and IFIH1-mediated antiviral innate response; this function requires 'Lys-27'-linked polyubiquitination. The chain is NF-kappa-B essential modulator (IKBKG) from Sus scrofa (Pig).